Consider the following 305-residue polypeptide: Methionyl-tRNA formyltransferase (305 aa).

108-111 (SLLP) serves as a coordination point for (6S)-5,6,7,8-tetrahydrofolate.

Belongs to the Fmt family.

The catalysed reaction is L-methionyl-tRNA(fMet) + (6R)-10-formyltetrahydrofolate = N-formyl-L-methionyl-tRNA(fMet) + (6S)-5,6,7,8-tetrahydrofolate + H(+). Functionally, attaches a formyl group to the free amino group of methionyl-tRNA(fMet). The formyl group appears to play a dual role in the initiator identity of N-formylmethionyl-tRNA by promoting its recognition by IF2 and preventing the misappropriation of this tRNA by the elongation apparatus. The chain is Methionyl-tRNA formyltransferase from Clavibacter michiganensis subsp. michiganensis (strain NCPPB 382).